Consider the following 490-residue polypeptide: Protein nucleotidyltransferase YdiU (490 aa).

ATP-binding residues include Gly-94, Gly-96, Arg-97, Lys-117, Asp-129, Gly-130, Arg-180, and Arg-187. Asp-256 (proton acceptor) is an active-site residue. Positions 257 and 266 each coordinate Mg(2+). Asp-266 contributes to the ATP binding site.

The protein belongs to the SELO family. Mg(2+) is required as a cofactor. Mn(2+) serves as cofactor.

The catalysed reaction is L-seryl-[protein] + ATP = 3-O-(5'-adenylyl)-L-seryl-[protein] + diphosphate. It carries out the reaction L-threonyl-[protein] + ATP = 3-O-(5'-adenylyl)-L-threonyl-[protein] + diphosphate. It catalyses the reaction L-tyrosyl-[protein] + ATP = O-(5'-adenylyl)-L-tyrosyl-[protein] + diphosphate. The enzyme catalyses L-histidyl-[protein] + UTP = N(tele)-(5'-uridylyl)-L-histidyl-[protein] + diphosphate. The catalysed reaction is L-seryl-[protein] + UTP = O-(5'-uridylyl)-L-seryl-[protein] + diphosphate. It carries out the reaction L-tyrosyl-[protein] + UTP = O-(5'-uridylyl)-L-tyrosyl-[protein] + diphosphate. Functionally, nucleotidyltransferase involved in the post-translational modification of proteins. It can catalyze the addition of adenosine monophosphate (AMP) or uridine monophosphate (UMP) to a protein, resulting in modifications known as AMPylation and UMPylation. This Clostridium perfringens (strain SM101 / Type A) protein is Protein nucleotidyltransferase YdiU.